Here is a 2167-residue protein sequence, read N- to C-terminus: GTPase-activating protein BEM2/IPL2 (2167 aa).

Disordered stretches follow at residues 1-209, 243-305, and 353-372; these read MKGL…NDNE, TNYN…ASAR, and NSSI…NNQA. The segment covering 12-51 has biased composition (low complexity); the sequence is SSTASASSSSTSTSHKTTTASTASSSSPSSSSQTIRNSTS. A Glycyl lysine isopeptide (Lys-Gly) (interchain with G-Cter in ubiquitin) cross-link involves residue Lys-27. Residues 58-70 show a composition bias toward basic residues; sequence HSHHHHGQGHSHH. Positions 89–118 are enriched in polar residues; sequence KQYTSTSSSQVNLGMYHSDTNTRSSRSIAS. Ser-129 is modified (phosphoserine). The segment covering 134–145 has biased composition (polar residues); it reads SNSSSQKSNAQD. Low complexity-rich tracts occupy residues 160-177 and 187-207; these read SLLP…SRCS and NTSG…NNND. The segment covering 243–252 has biased composition (polar residues); that stretch reads TNYNSSMTAP. Phosphoserine is present on Ser-283. The span at 289–300 shows a compositional bias: low complexity; sequence SSSTTATNSGND. The 268-residue stretch at 592–859 folds into the Ras-GEF domain; that stretch reads DITTLADEVH…MKLSVQHEPP (268 aa). 2 positions are modified to phosphoserine: Ser-1012 and Ser-1016. Thr-1038 is subject to Phosphothreonine. Ser-1046, Ser-1054, and Ser-1128 each carry phosphoserine. The segment covering 1771 to 1794 has biased composition (polar residues); the sequence is ISGTHSDNDHSYNINKNTGQTPSL. The disordered stretch occupies residues 1771–1828; that stretch reads ISGTHSDNDHSYNINKNTGQTPSLGSVMESNNSARNRRDSRASFSTNRSSVVSNSSHN. Residues 1812-1828 are compositionally biased toward low complexity; sequence ASFSTNRSSVVSNSSHN. Residues 1846–1948 enclose the PH domain; sequence GFNTSSSNYS…WIKMIKASKR (103 aa). One can recognise a Rho-GAP domain in the interval 1967-2165; the sequence is VPLEDVCERE…DFIKNPNDYF (199 aa).

Its function is as follows. GTPase-activating protein (GAP) for RHO1 and RHO2. Involved in the control of cellular morphogenesis. Required for proper bud site selection and bud emergence. The sequence is that of GTPase-activating protein BEM2/IPL2 (BEM2) from Saccharomyces cerevisiae (strain ATCC 204508 / S288c) (Baker's yeast).